The primary structure comprises 107 residues: UPF0060 membrane protein PSHAa1175 (107 aa).

A run of 4 helical transmembrane segments spans residues 3-23 (IFGL…LPYL), 30-50 (SVWL…LLSL), 60-80 (AAYG…VDGI), and 84-104 (TWDL…MFAP).

Belongs to the UPF0060 family.

Its subcellular location is the cell inner membrane. The protein is UPF0060 membrane protein PSHAa1175 of Pseudoalteromonas translucida (strain TAC 125).